We begin with the raw amino-acid sequence, 377 residues long: tRNA(Met) cytidine acetate ligase (377 aa).

ATP contacts are provided by residues 7-20 (VTEY…HLYH), Gly-100, Asn-153, and Arg-178.

It belongs to the TmcAL family.

It is found in the cytoplasm. The enzyme catalyses cytidine(34) in elongator tRNA(Met) + acetate + ATP = N(4)-acetylcytidine(34) in elongator tRNA(Met) + AMP + diphosphate. Functionally, catalyzes the formation of N(4)-acetylcytidine (ac(4)C) at the wobble position of elongator tRNA(Met), using acetate and ATP as substrates. First activates an acetate ion to form acetyladenylate (Ac-AMP) and then transfers the acetyl group to tRNA to form ac(4)C34. This Staphylococcus saprophyticus subsp. saprophyticus (strain ATCC 15305 / DSM 20229 / NCIMB 8711 / NCTC 7292 / S-41) protein is tRNA(Met) cytidine acetate ligase.